A 495-amino-acid polypeptide reads, in one-letter code: Lysine--tRNA ligase (495 aa).

Positions 406 and 413 each coordinate Mg(2+).

Belongs to the class-II aminoacyl-tRNA synthetase family. As to quaternary structure, homodimer. Mg(2+) is required as a cofactor.

It localises to the cytoplasm. The catalysed reaction is tRNA(Lys) + L-lysine + ATP = L-lysyl-tRNA(Lys) + AMP + diphosphate. In Staphylococcus aureus, this protein is Lysine--tRNA ligase (lysS).